The primary structure comprises 59 residues: Large ribosomal subunit protein uL30 (59 aa).

This sequence belongs to the universal ribosomal protein uL30 family. In terms of assembly, part of the 50S ribosomal subunit.

The sequence is that of Large ribosomal subunit protein uL30 from Stutzerimonas stutzeri (strain A1501) (Pseudomonas stutzeri).